The sequence spans 276 residues: Radial spoke head protein 9 homolog (276 aa).

Belongs to the flagellar radial spoke RSP9 family. As to quaternary structure, component of the axonemal radial spoke 1 (RS1) and 2 (RS2) complexes, at least composed of spoke head proteins RSPH1, RSPH3, RSPH9 and the cilia-specific component RSPH4A or sperm-specific component RSPH6A, spoke stalk proteins RSPH14, DNAJB13, DYDC1, ROPN1L and NME5, and the RS1 complex-specific anchor protein IQUB. Interacts with IQUB. Interacts with RSPH3B. Interacts with RSPH4A. Interacts with RSPH6A. Interacts with CFAP61. Interacts with LRRC23.

The protein localises to the cytoplasm. The protein resides in the cytoskeleton. It localises to the cilium axoneme. Its subcellular location is the flagellum axoneme. It is found in the cell projection. The protein localises to the kinocilium. Its function is as follows. Functions as part of axonemal radial spoke complexes that play an important part in the motility of sperm and cilia. Essential for both the radial spoke head assembly and the central pair microtubule stability in ependymal motile cilia. Required for motility of olfactory and neural cilia and for the structural integrity of ciliary axonemes in both 9+0 and 9+2 motile cilia. The chain is Radial spoke head protein 9 homolog (RSPH9) from Homo sapiens (Human).